The following is a 593-amino-acid chain: Numb-related protein 1 (593 aa).

4 disordered regions span residues 1-97, 235-278, 331-375, and 493-581; these read MSAS…WQPD, TAQV…NSRS, LRQG…FGTQ, and MSMS…DPFD. At S17 the chain carries Phosphoserine; by PKC. Over residues 27-37 the composition is skewed to polar residues; sequence QNSLVSEQQPS. A compositionally biased stretch (basic residues) spans 64–74; the sequence is RSLRLPKKRRD. At S65 the chain carries Phosphoserine; by PKC. A PID domain is found at 102-255; it reads RTGTCCFNVK…STSSTPPKDI (154 aa). 3 stretches are compositionally biased toward polar residues: residues 236-251, 261-278, and 354-364; these read AQVNVQSAQESTSSTP, EDNTSEGTSTQNPSNSRS, and SLRTVSNNPTE. Residues 493–511 are compositionally biased toward low complexity; it reads MSMSPTSPSSDPPSTSSYS. The span at 516–528 shows a compositional bias: pro residues; sequence SGPPPAHAPPPLP. The span at 532-565 shows a compositional bias: polar residues; sequence AVSNGSPSIYQQQLQQANSTRNSPAGINWNSSPN.

In terms of assembly, interacts with pkc-3. As to expression, expressed in cells comprising the intestine, pharyngeal cells, the anal sphincter and depressor muscles.

Its subcellular location is the cytoplasm. The protein localises to the cell cortex. It localises to the cytoskeleton. It is found in the membrane. In terms of biological role, involved in the tethering and targeting of pkc-3 to modulate the intracellular distribution of the kinase. The complex formed with pkc-3 complexes are likely to be involved in assembly, maintenance, and/or regulation of protein complexes that execute asymmetric and/or polarized cell functions. This is Numb-related protein 1 from Caenorhabditis elegans.